A 2541-amino-acid chain; its full sequence is Talin-1 (2541 aa).

The FERM domain maps to Arg-86–Lys-403. The tract at residues Phe-280–Gln-435 is interaction with LAYN. A helical bundle R1 region spans residues Arg-482–Ile-655. The tract at residues Gly-656 to Lys-786 is helical bundle R2. The tract at residues Gln-787–Lys-911 is helical bundle R3. Positions Leu-913 to Ala-1043 are helical bundle R4. The tract at residues Gly-1045–Gln-1205 is helical bundle R5. The tract at residues Arg-1206–Ala-1356 is helical bundle R6. Residues Pro-1357–Asn-1452 form a helical bundle R7A region. The tract at residues Gly-1358–Arg-1658 is interaction with VCL and F-actin. The segment at Leu-1460–Glu-1579 is helical bundle R8. O-linked (GlcNAc) threonine glycosylation occurs at Thr-1486. Residues Phe-1580–Asp-1652 are helical bundle R7B. The interval Ala-1654–Gly-1821 is helical bundle R9. The helical bundle R10 stretch occupies residues Val-1822–Arg-1972. Residue Thr-1889 is glycosylated (O-linked (GlcNAc) threonine). The tract at residues Gly-1973–Thr-2139 is helical bundle R11. Positions Lys-2140–Glu-2293 are helical bundle R12. Residues Thr-2292–Leu-2531 form the I/LWEQ domain. Residues Asp-2299–Asp-2481 are helical bundle R13.

In terms of assembly, interacts with PIP5K1C and NRAP. Binds with high affinity to vinculin VCL and with low affinity to integrins. Interacts with APBB1IP; this inhibits VCL binding. Interacts with F-actin. Interacts with LAYN. Interacts with THSD1. Post-translationally, phosphorylated.

It is found in the cell projection. The protein resides in the ruffle membrane. It localises to the cytoplasm. Its subcellular location is the cytoskeleton. The protein localises to the cell surface. It is found in the cell junction. The protein resides in the focal adhesion. Its function is as follows. High molecular weight cytoskeletal protein concentrated at regions of cell-substratum contact and, in lymphocytes, at cell-cell contacts. Involved in connections of major cytoskeletal structures to the plasma membrane. The protein is Talin-1 (TLN1) of Gallus gallus (Chicken).